Consider the following 966-residue polypeptide: Translation initiation factor IF-2 (966 aa).

5 stretches are compositionally biased toward basic and acidic residues: residues 99-113 (KRDE…EAAD), 123-183 (EQAR…KAEE), 197-212 (DASR…RVAV), 220-249 (AADD…EAEA), and 266-277 (PSERKAEEKKAE). Positions 99–382 (KRDEAGADQH…NFQAPTEPVV (284 aa)) are disordered. The span at 304-315 (AATTTTTTATTT) shows a compositional bias: low complexity. The segment covering 346–359 (SSGGVGGWRGGPRG) has biased composition (gly residues). Positions 466–635 (PRPPVVTVMG…LLQAEVLELK (170 aa)) constitute a tr-type G domain. The tract at residues 475 to 482 (GHVDHGKT) is G1. Residue 475-482 (GHVDHGKT) coordinates GTP. The tract at residues 500–504 (GITQH) is G2. Residues 521 to 524 (DTPG) form a G3 region. GTP is bound by residues 521–525 (DTPGH) and 575–578 (NKID). Residues 575 to 578 (NKID) form a G4 region. The segment at 611-613 (SAK) is G5.

This sequence belongs to the TRAFAC class translation factor GTPase superfamily. Classic translation factor GTPase family. IF-2 subfamily.

It is found in the cytoplasm. Its function is as follows. One of the essential components for the initiation of protein synthesis. Protects formylmethionyl-tRNA from spontaneous hydrolysis and promotes its binding to the 30S ribosomal subunits. Also involved in the hydrolysis of GTP during the formation of the 70S ribosomal complex. This chain is Translation initiation factor IF-2, found in Cupriavidus pinatubonensis (strain JMP 134 / LMG 1197) (Cupriavidus necator (strain JMP 134)).